A 902-amino-acid polypeptide reads, in one-letter code: Protein translocase subunit SecA (902 aa).

ATP-binding positions include Q87, 105-109 (GEGKT), and D512. The tract at residues 836-902 (DVEKVEEQHR…KFKQCCGKLK (67 aa)) is disordered. Residues 840–863 (VEEQHRKSENAPREYQHEEVEHVG) are compositionally biased toward basic and acidic residues. Zn(2+) contacts are provided by C886, C888, C897, and C898.

This sequence belongs to the SecA family. In terms of assembly, monomer and homodimer. Part of the essential Sec protein translocation apparatus which comprises SecA, SecYEG and auxiliary proteins SecDF-YajC and YidC. Zn(2+) serves as cofactor.

It localises to the cell inner membrane. It is found in the cytoplasm. The enzyme catalyses ATP + H2O + cellular proteinSide 1 = ADP + phosphate + cellular proteinSide 2.. In terms of biological role, part of the Sec protein translocase complex. Interacts with the SecYEG preprotein conducting channel. Has a central role in coupling the hydrolysis of ATP to the transfer of proteins into and across the cell membrane, serving both as a receptor for the preprotein-SecB complex and as an ATP-driven molecular motor driving the stepwise translocation of polypeptide chains across the membrane. The polypeptide is Protein translocase subunit SecA (Pseudoalteromonas translucida (strain TAC 125)).